A 354-amino-acid polypeptide reads, in one-letter code: 3-dehydroquinate synthase (354 aa).

NAD(+) is bound by residues G100–D104, T124–T125, K136, K145, and F163–T166. The Zn(2+) site is built by E178, H242, and H256.

Belongs to the sugar phosphate cyclases superfamily. Dehydroquinate synthase family. The cofactor is NAD(+). Requires Co(2+) as cofactor. It depends on Zn(2+) as a cofactor.

It is found in the cytoplasm. It catalyses the reaction 7-phospho-2-dehydro-3-deoxy-D-arabino-heptonate = 3-dehydroquinate + phosphate. The protein operates within metabolic intermediate biosynthesis; chorismate biosynthesis; chorismate from D-erythrose 4-phosphate and phosphoenolpyruvate: step 2/7. Catalyzes the conversion of 3-deoxy-D-arabino-heptulosonate 7-phosphate (DAHP) to dehydroquinate (DHQ). The chain is 3-dehydroquinate synthase from Staphylococcus aureus (strain COL).